A 193-amino-acid polypeptide reads, in one-letter code: Ribonuclease HII (193 aa).

The region spanning 15–193 (CIVAGIDEAG…PYHRRSFRCC (179 aa)) is the RNase H type-2 domain. 3 residues coordinate a divalent metal cation: Asp21, Glu22, and Asp112.

Belongs to the RNase HII family. Mn(2+) is required as a cofactor. Mg(2+) serves as cofactor.

It is found in the cytoplasm. It catalyses the reaction Endonucleolytic cleavage to 5'-phosphomonoester.. Endonuclease that specifically degrades the RNA of RNA-DNA hybrids. The polypeptide is Ribonuclease HII (Rickettsia conorii (strain ATCC VR-613 / Malish 7)).